Here is an 884-residue protein sequence, read N- to C-terminus: Alanine--tRNA ligase (884 aa).

Zn(2+) is bound by residues H565, H569, C675, and H679.

The protein belongs to the class-II aminoacyl-tRNA synthetase family. The cofactor is Zn(2+).

Its subcellular location is the cytoplasm. The catalysed reaction is tRNA(Ala) + L-alanine + ATP = L-alanyl-tRNA(Ala) + AMP + diphosphate. In terms of biological role, catalyzes the attachment of alanine to tRNA(Ala) in a two-step reaction: alanine is first activated by ATP to form Ala-AMP and then transferred to the acceptor end of tRNA(Ala). Also edits incorrectly charged Ser-tRNA(Ala) and Gly-tRNA(Ala) via its editing domain. The protein is Alanine--tRNA ligase of Maricaulis maris (strain MCS10) (Caulobacter maris).